A 141-amino-acid polypeptide reads, in one-letter code: MISIGTDLVHIPAFADQLAQPGSSFMDVFGAGERRLASRRAGNRNAEHLAGRWAAKEAFIKAWSQAIYGQPPVIPEEDVQWALIEVRADRWGRVALDIAPSLDTQVRESIGDYTTSLSISHDGDYATAVCVLSYAVATENR.

Mg(2+) is bound by residues Asp-7 and Glu-57.

Belongs to the P-Pant transferase superfamily. AcpS family. Requires Mg(2+) as cofactor.

The protein localises to the cytoplasm. It catalyses the reaction apo-[ACP] + CoA = holo-[ACP] + adenosine 3',5'-bisphosphate + H(+). Its function is as follows. Transfers the 4'-phosphopantetheine moiety from coenzyme A to a Ser of acyl-carrier-protein. The chain is Holo-[acyl-carrier-protein] synthase from Corynebacterium efficiens (strain DSM 44549 / YS-314 / AJ 12310 / JCM 11189 / NBRC 100395).